The sequence spans 166 residues: NAD(P)H-quinone oxidoreductase subunit I, chloroplastic (166 aa).

4Fe-4S ferredoxin-type domains follow at residues 55–84 (GRIH…VDWK) and 95–124 (LNYS…MTEE). The [4Fe-4S] cluster site is built by cysteine 64, cysteine 67, cysteine 70, cysteine 74, cysteine 104, cysteine 107, cysteine 110, and cysteine 114.

It belongs to the complex I 23 kDa subunit family. In terms of assembly, NDH is composed of at least 16 different subunits, 5 of which are encoded in the nucleus. [4Fe-4S] cluster serves as cofactor.

The protein resides in the plastid. The protein localises to the chloroplast thylakoid membrane. The enzyme catalyses a plastoquinone + NADH + (n+1) H(+)(in) = a plastoquinol + NAD(+) + n H(+)(out). The catalysed reaction is a plastoquinone + NADPH + (n+1) H(+)(in) = a plastoquinol + NADP(+) + n H(+)(out). Its function is as follows. NDH shuttles electrons from NAD(P)H:plastoquinone, via FMN and iron-sulfur (Fe-S) centers, to quinones in the photosynthetic chain and possibly in a chloroplast respiratory chain. The immediate electron acceptor for the enzyme in this species is believed to be plastoquinone. Couples the redox reaction to proton translocation, and thus conserves the redox energy in a proton gradient. The chain is NAD(P)H-quinone oxidoreductase subunit I, chloroplastic from Parthenium hysterophorus (Santa Maria feverfew).